The primary structure comprises 122 residues: Small ribosomal subunit protein uS13 (122 aa).

The interval 97-122 is disordered; sequence PVRGQRTHTNARTRKGPAKAIAGKKK.

It belongs to the universal ribosomal protein uS13 family. As to quaternary structure, part of the 30S ribosomal subunit. Forms a loose heterodimer with protein S19. Forms two bridges to the 50S subunit in the 70S ribosome.

In terms of biological role, located at the top of the head of the 30S subunit, it contacts several helices of the 16S rRNA. In the 70S ribosome it contacts the 23S rRNA (bridge B1a) and protein L5 of the 50S subunit (bridge B1b), connecting the 2 subunits; these bridges are implicated in subunit movement. Contacts the tRNAs in the A and P-sites. This Bartonella tribocorum (strain CIP 105476 / IBS 506) protein is Small ribosomal subunit protein uS13.